Consider the following 252-residue polypeptide: Ditrans,polycis-undecaprenyl-diphosphate synthase ((2E,6E)-farnesyl-diphosphate specific) (252 aa).

Asp-25 is an active-site residue. Residue Asp-25 coordinates Mg(2+). Residues 26-29 (GNGR), Trp-30, Arg-38, His-42, and 70-72 (SSE) contribute to the substrate site. Asn-73 (proton acceptor) is an active-site residue. Substrate is bound by residues Trp-74, Arg-76, and Arg-193. His-198 is a binding site for Mg(2+). Substrate is bound at residue 199–201 (RIS). Glu-212 contributes to the Mg(2+) binding site.

This sequence belongs to the UPP synthase family. Homodimer. It depends on Mg(2+) as a cofactor.

The enzyme catalyses 8 isopentenyl diphosphate + (2E,6E)-farnesyl diphosphate = di-trans,octa-cis-undecaprenyl diphosphate + 8 diphosphate. Catalyzes the sequential condensation of isopentenyl diphosphate (IPP) with (2E,6E)-farnesyl diphosphate (E,E-FPP) to yield (2Z,6Z,10Z,14Z,18Z,22Z,26Z,30Z,34E,38E)-undecaprenyl diphosphate (di-trans,octa-cis-UPP). UPP is the precursor of glycosyl carrier lipid in the biosynthesis of bacterial cell wall polysaccharide components such as peptidoglycan and lipopolysaccharide. This Salmonella typhi protein is Ditrans,polycis-undecaprenyl-diphosphate synthase ((2E,6E)-farnesyl-diphosphate specific).